The chain runs to 176 residues: Transcriptional repressor NrdR (176 aa).

The segment at Cys3 to Cys34 is a zinc-finger region. One can recognise an ATP-cone domain in the interval Ile49–Asp139. The segment at Gly151–Gln176 is disordered. The segment covering Ala167–Gln176 has biased composition (polar residues).

The protein belongs to the NrdR family. Requires Zn(2+) as cofactor.

Negatively regulates transcription of bacterial ribonucleotide reductase nrd genes and operons by binding to NrdR-boxes. This chain is Transcriptional repressor NrdR, found in Acaryochloris marina (strain MBIC 11017).